A 525-amino-acid polypeptide reads, in one-letter code: GMP synthase [glutamine-hydrolyzing] (525 aa).

In terms of domain architecture, Glutamine amidotransferase type-1 spans 9–207 (RILILDFGSQ…VLDVCQCEAL (199 aa)). Cys86 (nucleophile) is an active-site residue. Catalysis depends on residues His181 and Glu183. In terms of domain architecture, GMPS ATP-PPase spans 208–400 (WTPASIIEDT…LGLPYDMLNR (193 aa)). 235-241 (SGGVDSS) serves as a coordination point for ATP.

As to quaternary structure, homodimer.

It carries out the reaction XMP + L-glutamine + ATP + H2O = GMP + L-glutamate + AMP + diphosphate + 2 H(+). The protein operates within purine metabolism; GMP biosynthesis; GMP from XMP (L-Gln route): step 1/1. Functionally, catalyzes the synthesis of GMP from XMP. This is GMP synthase [glutamine-hydrolyzing] from Photorhabdus laumondii subsp. laumondii (strain DSM 15139 / CIP 105565 / TT01) (Photorhabdus luminescens subsp. laumondii).